The following is a 392-amino-acid chain: 5-amino-6-(D-ribitylamino)uracil--L-tyrosine 4-hydroxyphenyl transferase (392 aa).

One can recognise a Radical SAM core domain in the interval 60–307 (VTYVVNRNIN…MAIARLYLGK (248 aa)). [4Fe-4S] cluster is bound by residues Cys74, Cys78, and Cys81.

It belongs to the radical SAM superfamily. CofH family. As to quaternary structure, consists of two subunits, CofG and CofH. The cofactor is [4Fe-4S] cluster.

It carries out the reaction 5-amino-6-(D-ribitylamino)uracil + L-tyrosine + S-adenosyl-L-methionine = 5-amino-5-(4-hydroxybenzyl)-6-(D-ribitylimino)-5,6-dihydrouracil + 2-iminoacetate + 5'-deoxyadenosine + L-methionine + H(+). It participates in cofactor biosynthesis; coenzyme F0 biosynthesis. Catalyzes the radical-mediated synthesis of 5-amino-5-(4-hydroxybenzyl)-6-(D-ribitylimino)-5,6-dihydrouracil from 5-amino-6-(D-ribitylamino)uracil and L-tyrosine. This chain is 5-amino-6-(D-ribitylamino)uracil--L-tyrosine 4-hydroxyphenyl transferase, found in Synechocystis sp. (strain ATCC 27184 / PCC 6803 / Kazusa).